The sequence spans 449 residues: Baeyer-Villiger oxidase GME11358 (449 aa).

This sequence belongs to the questin oxidase family.

The protein operates within secondary metabolite biosynthesis. Functionally, baeyer-Villiger oxidase; part of the gene cluster that mediates the biosynthesis of dibenzodioxocinones such as pestalotiollide B, a novel class of inhibitors against cholesterol ester transfer protein (CEPT). The biosynthesis initiates from condensation of acetate and malonate units catalyzed by the non-reducing PKS pks8/GME11356. Pks8/GME11356 lacks a thioesterase (TE) domain, which is important to the cyclizing of the third ring of atrochrysone carboxylic acid, and the esterase GME11355 might play the role of TE and catalyzes the cyclization reaction of the C ring. The lactamase-like protein GME11357 (or other beta-lactamases in Pestalotiopsis microspora) probably hydrolyzes the thioester bond between the ACP of pks8/GME11356 and the intermediate to release atrochrysone carboxylic acid, which is spontaneously dehydrates to form endocrocin anthrone. Endocrocin anthrone is further converted to emodin via the endocrocin intermediate. Emodin is then oxidized by several enzymes such as the Baeyer-Villiger oxidase GME11358, the oxidoreductase GME11367, the short chain dehydrogenase/reductase GME11373, as well as by other oxidoreductases from the cluster, to modify the A and C rings and open the B ring, and finally yield monodictyphenone. The prenyltransferase GME11375 may catalyze the addition reaction between the C5 side chains and the carbon bone of dibenzodioxocinones. The remaining biochemical reactions to the final product dibenzodioxocinones should be methylation catalyzed by methyltransferase GME11366 and reduction and lactonization reaction catalyzed by a series of oxidordeuctases. The sequence is that of Baeyer-Villiger oxidase GME11358 from Pestalotiopsis microspora.